Reading from the N-terminus, the 201-residue chain is Putative 3-methyladenine DNA glycosylase (201 aa).

Belongs to the DNA glycosylase MPG family.

In Rhodopseudomonas palustris (strain HaA2), this protein is Putative 3-methyladenine DNA glycosylase.